The primary structure comprises 396 residues: Elongation factor Tu 2 (396 aa).

The tr-type G domain occupies 10–206 (KPHVNVGTIG…AIDSYIPEPE (197 aa)). The G1 stretch occupies residues 19–26 (GHIDHGKT). 19-26 (GHIDHGKT) provides a ligand contact to GTP. Thr26 provides a ligand contact to Mg(2+). The tract at residues 60–64 (GITIA) is G2. The segment at 81-84 (DCPG) is G3. GTP-binding positions include 81-85 (DCPGH) and 136-139 (NKCD). A G4 region spans residues 136 to 139 (NKCD). The tract at residues 174–176 (SAL) is G5.

It belongs to the TRAFAC class translation factor GTPase superfamily. Classic translation factor GTPase family. EF-Tu/EF-1A subfamily. In terms of assembly, monomer.

Its subcellular location is the cytoplasm. It catalyses the reaction GTP + H2O = GDP + phosphate + H(+). GTP hydrolase that promotes the GTP-dependent binding of aminoacyl-tRNA to the A-site of ribosomes during protein biosynthesis. This is Elongation factor Tu 2 from Desulfotalea psychrophila (strain LSv54 / DSM 12343).